Reading from the N-terminus, the 208-residue chain is Small ribosomal subunit protein eS8 (208 aa).

Residues M1 to Y27 are disordered. The segment covering W8–K26 has biased composition (basic residues).

It belongs to the eukaryotic ribosomal protein eS8 family. Component of the small ribosomal subunit. Identified in a IGF2BP1-dependent mRNP granule complex containing untranslated mRNAs. Part of the small subunit (SSU) processome, composed of more than 70 proteins and the RNA chaperone small nucleolar RNA (snoRNA) U3.

The protein localises to the cytoplasm. It is found in the membrane. It localises to the nucleus. Its subcellular location is the nucleolus. Its function is as follows. Component of the small ribosomal subunit. The ribosome is a large ribonucleoprotein complex responsible for the synthesis of proteins in the cell. Part of the small subunit (SSU) processome, first precursor of the small eukaryotic ribosomal subunit. During the assembly of the SSU processome in the nucleolus, many ribosome biogenesis factors, an RNA chaperone and ribosomal proteins associate with the nascent pre-rRNA and work in concert to generate RNA folding, modifications, rearrangements and cleavage as well as targeted degradation of pre-ribosomal RNA by the RNA exosome. In Danio rerio (Zebrafish), this protein is Small ribosomal subunit protein eS8 (rps8).